The sequence spans 211 residues: ATP phosphoribosyltransferase (211 aa).

This sequence belongs to the ATP phosphoribosyltransferase family. Short subfamily. In terms of assembly, heteromultimer composed of HisG and HisZ subunits.

Its subcellular location is the cytoplasm. The catalysed reaction is 1-(5-phospho-beta-D-ribosyl)-ATP + diphosphate = 5-phospho-alpha-D-ribose 1-diphosphate + ATP. It participates in amino-acid biosynthesis; L-histidine biosynthesis; L-histidine from 5-phospho-alpha-D-ribose 1-diphosphate: step 1/9. Its function is as follows. Catalyzes the condensation of ATP and 5-phosphoribose 1-diphosphate to form N'-(5'-phosphoribosyl)-ATP (PR-ATP). Has a crucial role in the pathway because the rate of histidine biosynthesis seems to be controlled primarily by regulation of HisG enzymatic activity. The polypeptide is ATP phosphoribosyltransferase (Pseudomonas putida (strain ATCC 700007 / DSM 6899 / JCM 31910 / BCRC 17059 / LMG 24140 / F1)).